Consider the following 613-residue polypeptide: Dihydroxy-acid dehydratase (613 aa).

Residue D81 coordinates Mg(2+). C122 is a [2Fe-2S] cluster binding site. Residues D123 and K124 each contribute to the Mg(2+) site. Residue K124 is modified to N6-carboxylysine. Residue C193 participates in [2Fe-2S] cluster binding. Residue E489 participates in Mg(2+) binding. S515 (proton acceptor) is an active-site residue.

Belongs to the IlvD/Edd family. In terms of assembly, homodimer. The cofactor is [2Fe-2S] cluster. It depends on Mg(2+) as a cofactor.

The enzyme catalyses (2R)-2,3-dihydroxy-3-methylbutanoate = 3-methyl-2-oxobutanoate + H2O. The catalysed reaction is (2R,3R)-2,3-dihydroxy-3-methylpentanoate = (S)-3-methyl-2-oxopentanoate + H2O. Its pathway is amino-acid biosynthesis; L-isoleucine biosynthesis; L-isoleucine from 2-oxobutanoate: step 3/4. It participates in amino-acid biosynthesis; L-valine biosynthesis; L-valine from pyruvate: step 3/4. In terms of biological role, functions in the biosynthesis of branched-chain amino acids. Catalyzes the dehydration of (2R,3R)-2,3-dihydroxy-3-methylpentanoate (2,3-dihydroxy-3-methylvalerate) into 2-oxo-3-methylpentanoate (2-oxo-3-methylvalerate) and of (2R)-2,3-dihydroxy-3-methylbutanoate (2,3-dihydroxyisovalerate) into 2-oxo-3-methylbutanoate (2-oxoisovalerate), the penultimate precursor to L-isoleucine and L-valine, respectively. The chain is Dihydroxy-acid dehydratase from Pseudomonas fluorescens (strain ATCC BAA-477 / NRRL B-23932 / Pf-5).